The primary structure comprises 313 residues: Formimidoylglutamase (313 aa).

The Mn(2+) site is built by His-130, Asp-155, His-157, Asp-159, Asp-241, and Asp-243.

This sequence belongs to the arginase family. Mn(2+) serves as cofactor.

It catalyses the reaction N-formimidoyl-L-glutamate + H2O = formamide + L-glutamate. Its pathway is amino-acid degradation; L-histidine degradation into L-glutamate; L-glutamate from N-formimidoyl-L-glutamate (hydrolase route): step 1/1. Functionally, catalyzes the conversion of N-formimidoyl-L-glutamate to L-glutamate and formamide. The chain is Formimidoylglutamase from Salmonella schwarzengrund (strain CVM19633).